The chain runs to 198 residues: MSFSPQLVNLGNYLAGEFDNREQALGEPIWFVHLRLWQRPVDLFSDDSITLFAEQANIVNLDRPYRQRILRLMPAPDSETGLYVQYYMPKNPSALIGAGRHPDLLKTLTPQQLELLPGCVLSVSQQTVAPNSYQFTASPLPNTCCTFSYLENTVQVSLGFAVTETELHTYDKGIDQETGKATWGAIVGPYRYTKREQY.

The protein belongs to the CpcT/CpeT biliprotein lyase family.

In terms of biological role, covalently attaches a chromophore to Cys residue(s) of phycobiliproteins. In vitro is not seen to act as a chromophore lyase for ApcA1, ApcA2, ApcB, ApcD, ApcF, CpcB or PecB, the lyase activity is therefore unsure. The sequence is that of Phycocyanobilin lyase CpcT homolog (cpcT2) from Nostoc sp. (strain PCC 7120 / SAG 25.82 / UTEX 2576).